The following is a 745-amino-acid chain: Isocitrate dehydrogenase [NADP] 2 (745 aa).

NADP(+)-binding residues include asparagine 87 and serine 89. D-threo-isocitrate is bound by residues serine 134, asparagine 137, arginine 141, arginine 147, and lysine 257. Aspartate 352 is a binding site for Mg(2+). Residues tyrosine 422 and arginine 550 each contribute to the D-threo-isocitrate site. Residues aspartate 551 and aspartate 555 each coordinate Mg(2+). Residues glycine 587, serine 588, alanine 589, histidine 592, arginine 603, aspartate 605, and arginine 652 each coordinate NADP(+).

The protein belongs to the monomeric-type IDH family. In terms of assembly, may form homotrimers. Also forms homotetramers at low salt concentration, which are dissociated into homodimers, but not into monomers, at high salt concentration (1 M). Requires Mg(2+) as cofactor.

It catalyses the reaction D-threo-isocitrate + NADP(+) = 2-oxoglutarate + CO2 + NADPH. In terms of biological role, catalyzes the oxidative decarboxylation of isocitrate to 2-oxoglutarate and carbon dioxide with the concomitant reduction of NADP(+). Cannot use NAD(+). In Mycobacterium tuberculosis (strain ATCC 25618 / H37Rv), this protein is Isocitrate dehydrogenase [NADP] 2.